The primary structure comprises 88 residues: Small ribosomal subunit protein bS21 (88 aa).

The interval 58–88 is disordered; sequence ARKRAQREGLLPMTPRPVAAGGAAGAARPPR. Residues 73–88 show a composition bias toward low complexity; sequence RPVAAGGAAGAARPPR.

This sequence belongs to the bacterial ribosomal protein bS21 family.

This is Small ribosomal subunit protein bS21 from Mesorhizobium japonicum (strain LMG 29417 / CECT 9101 / MAFF 303099) (Mesorhizobium loti (strain MAFF 303099)).